The following is a 34-amino-acid chain: Small, acid-soluble spore protein M (34 aa).

The segment covering 1-10 (MKTRPKKAGQ) has biased composition (basic residues). The tract at residues 1–34 (MKTRPKKAGQQKKTESKAIDSLDKKLGGPNRPST) is disordered. The segment covering 12–26 (KKTESKAIDSLDKKL) has biased composition (basic and acidic residues).

It is found in the spore core. This Bacillus subtilis (strain 168) protein is Small, acid-soluble spore protein M (sspM).